Consider the following 299-residue polypeptide: ATP phosphoribosyltransferase (299 aa).

The protein belongs to the ATP phosphoribosyltransferase family. Long subfamily. Equilibrium between an active dimeric form, an inactive hexameric form and higher aggregates. Interconversion between the various forms is largely reversible and is influenced by the natural substrates and inhibitors of the enzyme. Mg(2+) serves as cofactor.

The protein localises to the cytoplasm. The enzyme catalyses 1-(5-phospho-beta-D-ribosyl)-ATP + diphosphate = 5-phospho-alpha-D-ribose 1-diphosphate + ATP. It participates in amino-acid biosynthesis; L-histidine biosynthesis; L-histidine from 5-phospho-alpha-D-ribose 1-diphosphate: step 1/9. Its activity is regulated as follows. Feedback inhibited by histidine. Catalyzes the condensation of ATP and 5-phosphoribose 1-diphosphate to form N'-(5'-phosphoribosyl)-ATP (PR-ATP). Has a crucial role in the pathway because the rate of histidine biosynthesis seems to be controlled primarily by regulation of HisG enzymatic activity. This Escherichia coli O157:H7 protein is ATP phosphoribosyltransferase.